Reading from the N-terminus, the 549-residue chain is Probable protein kinase UbiB (549 aa).

In terms of domain architecture, Protein kinase spans 123–501 (DFDETPLASA…QQQAHKSNYL (379 aa)). Residues 129 to 137 (LASASISQV) and K152 each bind ATP. Residue D287 is the Proton acceptor of the active site. 2 helical membrane-spanning segments follow: residues 498 to 518 (SNYL…LFNQ) and 520 to 540 (ATLW…IIGW).

Belongs to the ABC1 family. UbiB subfamily.

The protein localises to the cell inner membrane. It participates in cofactor biosynthesis; ubiquinone biosynthesis [regulation]. In terms of biological role, is probably a protein kinase regulator of UbiI activity which is involved in aerobic coenzyme Q (ubiquinone) biosynthesis. This is Probable protein kinase UbiB from Shewanella sp. (strain ANA-3).